The primary structure comprises 348 residues: Lipopolysaccharide heptosyltransferase 2 (348 aa).

The protein belongs to the glycosyltransferase 9 family.

It catalyses the reaction an L-alpha-D-Hep-(1-&gt;5)-[alpha-Kdo-(2-&gt;4)]-alpha-Kdo-(2-&gt;6)-lipid A + ADP-L-glycero-beta-D-manno-heptose = an L-alpha-D-Hep-(1-&gt;3)-L-alpha-D-Hep-(1-&gt;5)-[alpha-Kdo-(2-&gt;4)]-alpha-Kdo-(2-&gt;6)-lipid A + ADP + H(+). It functions in the pathway bacterial outer membrane biogenesis; LPS core biosynthesis. Glycosyltransferase involved in the biosynthesis of the core oligosaccharide region of lipopolysaccharide (LPS). Catalyzes the addition of the second heptose unit to the heptosyl-Kdo2-lipid A module. The sequence is that of Lipopolysaccharide heptosyltransferase 2 from Salmonella typhimurium (strain LT2 / SGSC1412 / ATCC 700720).